Consider the following 797-residue polypeptide: Calcium-transporting ATPase CtpE (797 aa).

3 helical membrane passes run 55-75, 215-235, and 254-274; these read LLLIVLATGSLINGMFGLLII, ILQFITYLLVPAGLLTIYTQL, and VPMVPEGLVLMTSIAFAVGVV. The 4-aspartylphosphate intermediate role is filled by D301. Mg(2+) is bound by residues D301, T303, and D536. 6 helical membrane passes run 601 to 621, 633 to 653, 667 to 687, 703 to 723, 729 to 749, and 764 to 784; these read TVYSVLLALLVGIECLIAIPL, IHVTIAAWFTIGIPAFILSLA, VMTSAVPFGLVIGVATFVTYL, ASTAALITLLMTALWVLAVIA, WRLALVLASGLAYVVIFSLPL, and TSIALAVGVVGAATIEAMWWI.

The protein belongs to the cation transport ATPase (P-type) (TC 3.A.3) family.

Its subcellular location is the cell membrane. The enzyme catalyses Ca(2+)(in) + ATP + H2O = Ca(2+)(out) + ADP + phosphate + H(+). Functionally, P-type ATPase involved in specific uptake of calcium. The protein is Calcium-transporting ATPase CtpE (ctpE) of Mycobacterium bovis (strain ATCC BAA-935 / AF2122/97).